Consider the following 384-residue polypeptide: MSRLQFQLQATDGAARRGQLSFPCGTVQTPAFMPVGTYGAVKAVLPGQLCDLGAEIILGNTFHLFLRPGLEVIADHGGLHGFMRWNGPILTDSGGFQVFSLAHRRKISEQGVTFAAPTDGAQVFLGPEESMKIQKVLNSDVVMIFDECTPYPATEDVARDSMELSLRWAQRSRDAHDALDNDAALFGIIQGGVHPDLRGRSLDGLQAIGFDGYAIGGLAVGESESERNVILEYLHPRLPVDRPRYLMGVGRPEDLVESVARGVDMFDCVMPTRHARNGQYFTGFGTVKIRNACYARDVDPIEPGCGCPACVGGYTRAYLRHLDRCNEMLASMLGSLHNLWYYETLMANMRAAITAGTFFTFRHSFYLARGLDPPPLPEVASCAG.

Asp-92 (proton acceptor) is an active-site residue. Residues 92–96, Asp-146, Gln-190, and Gly-217 each bind substrate; that span reads DSGGF. Residues 248 to 254 are RNA binding; the sequence is GVGRPED. The active-site Nucleophile is the Asp-267. The RNA binding; important for wobble base 34 recognition stretch occupies residues 272-276; the sequence is TRHAR. Zn(2+) is bound by residues Cys-305, Cys-307, Cys-310, and His-337.

This sequence belongs to the queuine tRNA-ribosyltransferase family. In terms of assembly, homodimer. Within each dimer, one monomer is responsible for RNA recognition and catalysis, while the other monomer binds to the replacement base PreQ1. Zn(2+) is required as a cofactor.

It catalyses the reaction 7-aminomethyl-7-carbaguanine + guanosine(34) in tRNA = 7-aminomethyl-7-carbaguanosine(34) in tRNA + guanine. It functions in the pathway tRNA modification; tRNA-queuosine biosynthesis. In terms of biological role, catalyzes the base-exchange of a guanine (G) residue with the queuine precursor 7-aminomethyl-7-deazaguanine (PreQ1) at position 34 (anticodon wobble position) in tRNAs with GU(N) anticodons (tRNA-Asp, -Asn, -His and -Tyr). Catalysis occurs through a double-displacement mechanism. The nucleophile active site attacks the C1' of nucleotide 34 to detach the guanine base from the RNA, forming a covalent enzyme-RNA intermediate. The proton acceptor active site deprotonates the incoming PreQ1, allowing a nucleophilic attack on the C1' of the ribose to form the product. After dissociation, two additional enzymatic reactions on the tRNA convert PreQ1 to queuine (Q), resulting in the hypermodified nucleoside queuosine (7-(((4,5-cis-dihydroxy-2-cyclopenten-1-yl)amino)methyl)-7-deazaguanosine). This is Queuine tRNA-ribosyltransferase from Xylella fastidiosa (strain M12).